Here is a 419-residue protein sequence, read N- to C-terminus: NF-kappa-B essential modulator (419 aa).

The segment at 1–46 (MSRTPWKSQPCEMVQPSGGPAGDQDVLGEESSLGKPTMLHLPSEQG) is disordered. Residues 1-197 (MSRTPWKSQP…REALQQQHSV (197 aa)) form a required for interaction with and ubiquitination by MARCHF2 region. Phosphoserine is present on residues S31, S43, S68, and S85. An interaction with CHUK/IKBKB region spans residues 44–111 (EQGAPETFQR…RLVERLSLEK (68 aa)). Positions 100–353 (ARRLVERLSL…KTSCQESARI (254 aa)) form a coiled coil. Glycyl lysine isopeptide (Lys-Gly) (interchain with G-Cter in ubiquitin) cross-links involve residues K111, K139, K143, K226, K246, and K264. The segment at 150–257 (LGELQESQSR…SVVSSERNRG (108 aa)) is interaction with TANK. Positions 242 to 350 (DNHIKSSVVS…SRLKTSCQES (109 aa)) are ubiquitin-binding (UBAN). Residues 246–365 (KSSVVSSERN…MRKRHVEVSQ (120 aa)) are self-association. A required for interaction with TNFAIP3 region spans residues 251 to 419 (SSERNRGLQL…LQIHVMECIE (169 aa)). K277 participates in a covalent cross-link: Glycyl lysine isopeptide (Lys-Gly) (interchain with G-Cter in SUMO); alternate. A Glycyl lysine isopeptide (Lys-Gly) (interchain with G-Cter in ubiquitin); alternate cross-link involves residue K277. Residues K283, K285, K292, and K302 each participate in a glycyl lysine isopeptide (Lys-Gly) (interchain with G-Cter in ubiquitin) cross-link. Residue K309 forms a Glycyl lysine isopeptide (Lys-Gly) (interchain with G-Cter in SUMO); alternate linkage. Residue K309 forms a Glycyl lysine isopeptide (Lys-Gly) (interchain with G-Cter in ubiquitin); alternate linkage. The interval 322–343 (LAERKELLQEQLEQLQREYSRL) is leucine-zipper. K326 is covalently cross-linked (Glycyl lysine isopeptide (Lys-Gly) (interchain with G-Cter in ubiquitin)). The tract at residues 363–394 (VSQPTLPPAPAHHSFHPALPSQRRSPPEEPPN) is disordered. Phosphoserine is present on residues S376 and S387. Positions 382 to 419 (PSQRRSPPEEPPNFCCPKCQYQAPDMDTLQIHVMECIE) are interaction with CYLD. Residues 389–419 (PEEPPNFCCPKCQYQAPDMDTLQIHVMECIE) form a CCHC NOA-type zinc finger. C397 contacts Zn(2+). Residue K399 forms a Glycyl lysine isopeptide (Lys-Gly) (interchain with G-Cter in ubiquitin) linkage. Zn(2+)-binding residues include C400, H413, and C417.

Homodimer; disulfide-linked. Component of the I-kappa-B-kinase (IKK) core complex consisting of CHUK, IKBKB and IKBKG; probably four alpha/CHUK-beta/IKBKB dimers are associated with four gamma/IKBKG subunits. The IKK core complex seems to associate with regulatory or adapter proteins to form a IKK-signalosome holo-complex. The IKK complex associates with TERF2IP/RAP1, leading to promote IKK-mediated phosphorylation of RELA/p65. Part of a complex composed of NCOA2, NCOA3, CHUK/IKKA, IKBKB, IKBKG and CREBBP. Interacts with COPS3, CYLD, NALP2, TRPC4AP and PIDD1. Interacts with ATM; the complex is exported from the nucleus. Interacts with TRAF6. Interacts with IKBKE. Interacts with TANK; the interaction is enhanced by IKBKE and TBK1. Part of a ternary complex consisting of TANK, IKBKB and IKBKG. Interacts with ZFAND5. Interacts with RIPK2. Interacts with TNIP1 and TNFAIP3; TNIP1 facilitates the TNFAIP3-mediated de-ubiquitination of IKBKG. Interacts with TNFAIP3; the interaction is induced by TNF stimulation and by polyubiquitin. Binds (via UBAN region) polyubiquitin; binds both 'Lys-63'-linked and linear polyubiquitin, with higher affinity for linear ubiquitin. Interacts with NLRP10. Interacts with TANK; this interaction increases in response to DNA damage. Interacts with USP10; this interaction increases in response to DNA damage. Interacts with ZC3H12A; this interaction increases in response to DNA damage. Interacts with IFIT5; the interaction synergizes the recruitment of IKK to MAP3K7 and enhances IKK phosphorylation. Interacts with TRIM29; this interaction induces IKBKG/NEMO ubiquitination and proteolytic degradation. Interacts with TRIM13; this interaction leads to IKBKG/NEMO ubiquitination. Interacts with ARFIP2. Interacts with RIPK1. Interacts with (ubiquitinated) BCL10; interaction with polyubiquitinated BCL10 via both 'Lys-63'-linked and linear ubiquitin is required for TCR-induced NF-kappa-B activation. Interacts with MARCHF2; during the late stages of macrophage viral and bacterial infection; the interaction leads to ubiquitination and degradation of IKBKG/NEMO. Phosphorylation at Ser-68 attenuates aminoterminal homodimerization. In terms of processing, polyubiquitinated on Lys-285 via 'Lys-63'-linked ubiquitin; the ubiquitination is mediated downstream of NOD2 and RIPK2 and probably plays a role in signaling by facilitating interactions with ubiquitin domain-containing proteins and activates the NF-kappa-B pathway. Polyubiquitinated on Lys-285 and Lys-399 through 'Lys-63'-linked ubiquitin; the ubiquitination is mediated by BCL10, MALT1 and TRAF6 and probably plays a role in signaling by facilitating interactions with ubiquitin domain-containing proteins and activates the NF-kappa-B pathway. Monoubiquitinated on Lys-277 and Lys-309; promotes nuclear export. Polyubiquitinated through 'Lys-27' by TRIM23; involved in antiviral innate and inflammatory responses. Linear polyubiquitinated on Lys-111, Lys-143, Lys-226, Lys-246, Lys-264, Lys-277, Lys-285, Lys-292, Lys-302, Lys-309 and Lys-326; the head-to-tail polyubiquitination is mediated by the LUBAC complex and plays a key role in NF-kappa-B activation. Deubiquitinated by USP10 in a TANK-dependent and -independent manner, leading to the negative regulation of NF-kappa-B signaling upon DNA damage. Ubiquitinated at Lys-326 by MARCHF2 following bacterial and viral infection which leads to its degradation. Post-translationally, sumoylated on Lys-277 and Lys-309 with SUMO1; the modification results in phosphorylation of Ser-85 by ATM leading to a replacement of the sumoylation by mono-ubiquitination on these residues. Neddylated by TRIM40, resulting in stabilization of NFKBIA and down-regulation of NF-kappa-B activity. In terms of processing, (Microbial infection) Cleaved by porcine reproductive and respiratory syndrome virus serine protease nsp4 after Glu-349. The cleavage inhibits NEMO proper function.

The protein localises to the cytoplasm. It localises to the nucleus. Functionally, regulatory subunit of the IKK core complex which phosphorylates inhibitors of NF-kappa-B thus leading to the dissociation of the inhibitor/NF-kappa-B complex and ultimately the degradation of the inhibitor. Its binding to scaffolding polyubiquitin plays a key role in IKK activation by multiple signaling receptor pathways. Can recognize and bind both 'Lys-63'-linked and linear polyubiquitin upon cell stimulation, with a much highr affinity for linear polyubiquitin. Could be implicated in NF-kappa-B-mediated protection from cytokine toxicity. Essential for viral activation of IRF3. Involved in TLR3- and IFIH1-mediated antiviral innate response; this function requires 'Lys-27'-linked polyubiquitination. The sequence is that of NF-kappa-B essential modulator (IKBKG) from Sus scrofa (Pig).